The sequence spans 329 residues: Alternative oxidase, mitochondrial (329 aa).

The chain crosses the membrane as a helical span at residues 115–135; sequence VISRCLFLETVAGVPGMVGGM. Fe cation-binding residues include Glu123, Glu162, and His165. Residues 181 to 201 form a helical membrane-spanning segment; the sequence is VSIIITQAIMYLFLLVAYVIS. Positions 213, 266, and 269 each coordinate Fe cation. The interval 300–329 is disordered; the sequence is EMYSNQPSGKTRTDFGSEGAKTASNVNKHV.

This sequence belongs to the alternative oxidase family. Homodimer; disulfide-linked. Requires Fe cation as cofactor.

The protein localises to the mitochondrion inner membrane. In terms of biological role, catalyzes cyanide-resistant oxygen consumption. May increase respiration when the cytochrome respiratory pathway is restricted, or in response to low temperatures. In Trypanosoma brucei brucei, this protein is Alternative oxidase, mitochondrial (AOX).